A 616-amino-acid chain; its full sequence is Glycogenin-1 (616 aa).

Positions 10, 16, and 95 each coordinate UDP. UDP-alpha-D-glucose-binding residues include Leu10, Tyr16, Arg95, Lys104, Asp120, Asp122, Asn158, Ser159, Asp185, Asp188, and Gln189. Residues Asp120 and Asp122 each coordinate UDP. Mn(2+) contacts are provided by Asp120 and Asp122. A glycan (O-linked (Glc...) tyrosine) is linked at Tyr230. Positions 247, 250, and 253 each coordinate UDP. His247 is a Mn(2+) binding site. The UDP-alpha-D-glucose site is built by Gly250 and Lys253. The span at 283-302 shows a compositional bias: basic and acidic residues; sequence HQLNNEVSKPKISDSDKTET. Disordered stretches follow at residues 283 to 320, 335 to 354, and 371 to 516; these read HQLN…PTTN, NQNA…NPVP, and TNQP…SVDD. Residues 377–386 show a composition bias toward basic and acidic residues; it reads ESREYSKEND. Polar residues predominate over residues 400-419; sequence SPPNSTQEPNSSYSVVSTQA. The span at 450-461 shows a compositional bias: low complexity; sequence STAASSNNNVSN. 2 stretches are compositionally biased toward polar residues: residues 462 to 485 and 492 to 503; these read QPDN…PSNP and DNIQKPSVSTND. An O-linked (Glc...) tyrosine glycan is attached at Tyr598.

It belongs to the glycosyltransferase 8 family. Glycogenin subfamily. Mn(2+) is required as a cofactor.

Its subcellular location is the cytoplasm. The protein localises to the vacuole. It carries out the reaction L-tyrosyl-[glycogenin] + UDP-alpha-D-glucose = alpha-D-glucosyl-L-tyrosyl-[glycogenin] + UDP + H(+). The catalysed reaction is [1,4-alpha-D-glucosyl](n)-L-tyrosyl-[glycogenin] + UDP-alpha-D-glucose = [1,4-alpha-D-glucosyl](n+1)-L-tyrosyl-[glycogenin] + UDP + H(+). Self-glucosylating initiator of glycogen synthesis. It catalyzes the formation of a short alpha (1,4)-glucosyl chain covalently attached via a glucose 1-O-tyrosyl linkage to internal tyrosine residues and these chains act as primers for the elongation reaction catalyzed by glycogen synthase. Capable of transferring glucosyl residues to unbound acceptors such as free oligoglucans or oligoglucan derivatives. The chain is Glycogenin-1 (GLG1) from Saccharomyces cerevisiae (strain YJM789) (Baker's yeast).